The chain runs to 161 residues: Pleiotrophin-A (161 aa).

The signal sequence occupies residues 1–23 (MRHQHGLFMLALLAFLFVITVLG). Disulfide bonds link Cys41–Cys70, Cys49–Cys79, Cys56–Cys83, Cys93–Cys125, and Cys103–Cys135. Chondroitin sulfate binding regions lie at residues 86–93 (KKQFGAEC) and 117–125 (KRALHNAEC). Residues 136–161 (GKVTKPKLQESKKKKKEGKNKEKLLD) form a disordered region. Residues 141-161 (PKLQESKKKKKEGKNKEKLLD) are chondroitin sulfate A binding.

Belongs to the pleiotrophin family. In terms of tissue distribution, expressed in high levels in brain and eye. Lower levels in bone. In the tailbud embryo stage, it is expressed exclusively in the central nervous system, especially in the hind region of the brain.

Its subcellular location is the secreted. In terms of biological role, secreted growth factor that mediates its signal through cell-surface proteoglycan and non-proteoglycan receptors. Binds cell-surface proteoglycan receptor via their chondroitin sulfate (CS) groups. Thereby regulates many processes like cell proliferation, cell survival, cell growth, cell differentiation and cell migration. Has antibacterial activity against both Gram-positive and Gram-negative bacteria. This Xenopus laevis (African clawed frog) protein is Pleiotrophin-A (ptn-a).